Reading from the N-terminus, the 286-residue chain is Beta-lactamase SHV-13 (286 aa).

The first 21 residues, 1–21, serve as a signal peptide directing secretion; that stretch reads MRYIRLCIISLLATLPLAVHA. The Acyl-ester intermediate role is filled by Ser-66. Cys-73 and Cys-119 are oxidised to a cystine. Glu-164 (proton acceptor) is an active-site residue. 230 to 232 contacts substrate; the sequence is KTG.

The protein belongs to the class-A beta-lactamase family.

The enzyme catalyses a beta-lactam + H2O = a substituted beta-amino acid. With respect to regulation, inhibited 16-fold better by the beta-lactamase inhibitor clavulanic acid than by tazobactam. Functionally, broad spectrum beta-lactamase which hydrolyzes penicillins, as well as cephalosporins except cephamycins. Also hydrolyzes aztreonam, but not imipenem. Confers highly resistance to ceftazidime, cefotaxime, aztreonam and piperacillin. The protein is Beta-lactamase SHV-13 (bla) of Klebsiella pneumoniae.